Consider the following 232-residue polypeptide: Lipoprotein-releasing system ATP-binding protein LolD (232 aa).

Positions 11–232 constitute an ABC transporter domain; sequence IEVTDLQRAF…LHDGRLIEEY (222 aa). 47–54 is an ATP binding site; sequence GPSGAGKS.

The protein belongs to the ABC transporter superfamily. Lipoprotein translocase (TC 3.A.1.125) family. As to quaternary structure, the complex is composed of two ATP-binding proteins (LolD) and two transmembrane proteins (LolC and LolE).

The protein resides in the cell inner membrane. In terms of biological role, part of the ABC transporter complex LolCDE involved in the translocation of mature outer membrane-directed lipoproteins, from the inner membrane to the periplasmic chaperone, LolA. Responsible for the formation of the LolA-lipoprotein complex in an ATP-dependent manner. This Zymomonas mobilis subsp. mobilis (strain ATCC 10988 / DSM 424 / LMG 404 / NCIMB 8938 / NRRL B-806 / ZM1) protein is Lipoprotein-releasing system ATP-binding protein LolD.